The chain runs to 237 residues: MEKVMLSFDKVSAHYGKIQALHEVSLHINQGEIVTLIGANGAGKTTLLGTLCGDPRATSGRIVFDDKDITDWQTAKIMREAVAIVPEGRRVFSRMTVEENLAMGGFFAERDQFQERIKWVYELFPRLHERRIQRAGTMSGGEQQMLAIGRALMSNPRLLLLDEPSLGLAPIIIQQIFDTIEQLREQGMTIFLVEQNANQALKLADRGYVLENGHVVLSDTGDALLANEAVRSAYLGG.

The ABC transporter domain maps to 6 to 237 (LSFDKVSAHY…EAVRSAYLGG (232 aa)). 38 to 45 (GANGAGKT) serves as a coordination point for ATP.

Belongs to the ABC transporter superfamily.

Its function is as follows. Component of the leucine-specific transport system. This chain is High-affinity branched-chain amino acid transport ATP-binding protein LivF (livF), found in Escherichia coli (strain K12).